Here is a 164-residue protein sequence, read N- to C-terminus: Protein-export protein SecB (164 aa).

It belongs to the SecB family. As to quaternary structure, homotetramer, a dimer of dimers. One homotetramer interacts with 1 SecA dimer.

The protein localises to the cytoplasm. One of the proteins required for the normal export of preproteins out of the cell cytoplasm. It is a molecular chaperone that binds to a subset of precursor proteins, maintaining them in a translocation-competent state. It also specifically binds to its receptor SecA. The protein is Protein-export protein SecB of Orientia tsutsugamushi (strain Ikeda) (Rickettsia tsutsugamushi).